We begin with the raw amino-acid sequence, 2097 residues long: SCAR-like protein 1 (2097 aa).

Disordered regions lie at residues isoleucine 205–threonine 227, alanine 544–serine 565, serine 1443–serine 1467, serine 1588–lysine 1616, glutamine 1730–valine 1802, alanine 1820–serine 1842, and tyrosine 1893–tyrosine 1944. Over residues lysine 549–serine 562 the composition is skewed to low complexity. Positions serine 1443–asparagine 1454 are enriched in polar residues. The span at serine 1766–alanine 1794 shows a compositional bias: polar residues. Over residues tyrosine 1908–glutamine 1922 the composition is skewed to basic and acidic residues. The WH2 domain occupies glutamate 2028–valine 2046.

The protein belongs to the SCAR/WAVE family.

The protein localises to the cytoplasm. It localises to the cytoskeleton. In terms of biological role, involved in regulation of actin and microtubule organization. Part of a WAVE complex that activates the Arp2/3 complex. The polypeptide is SCAR-like protein 1 (Oryza sativa subsp. japonica (Rice)).